Consider the following 670-residue polypeptide: Transketolase, chromosomal (670 aa).

Residue His-32 participates in substrate binding. Residues His-72 and 120–122 (GPL) each bind thiamine diphosphate. Residue Asp-161 coordinates Mg(2+). Residues Gly-162 and Asn-191 each contribute to the thiamine diphosphate site. Positions 191 and 193 each coordinate Mg(2+). Residues His-267, Arg-364, and Ser-391 each contribute to the substrate site. Residue His-267 coordinates thiamine diphosphate. The active-site Proton donor is the Glu-417. Residue Phe-443 coordinates thiamine diphosphate. Substrate-binding residues include His-467, Asp-475, and Arg-526.

This sequence belongs to the transketolase family. Homodimer. It depends on Mg(2+) as a cofactor. Requires Ca(2+) as cofactor. Mn(2+) serves as cofactor. Co(2+) is required as a cofactor. The cofactor is thiamine diphosphate.

It carries out the reaction D-sedoheptulose 7-phosphate + D-glyceraldehyde 3-phosphate = aldehydo-D-ribose 5-phosphate + D-xylulose 5-phosphate. Its pathway is carbohydrate biosynthesis; Calvin cycle. Catalyzes the transfer of a two-carbon ketol group from a ketose donor to an aldose acceptor, via a covalent intermediate with the cofactor thiamine pyrophosphate. The polypeptide is Transketolase, chromosomal (cbbTC) (Cupriavidus necator (strain ATCC 17699 / DSM 428 / KCTC 22496 / NCIMB 10442 / H16 / Stanier 337) (Ralstonia eutropha)).